Reading from the N-terminus, the 203-residue chain is Putative zinc finger protein 876 (203 aa).

C2H2-type zinc fingers lie at residues 63 to 85, 91 to 113, 119 to 141, and 147 to 169; these read YTCE…KNIH, YKCE…KRIH, YKCE…KKIH, and YKCK…TNIH. Residues 175-197 form a C2H2-type 5; degenerate zinc finger; that stretch reads YTCEECGKDFTWSSTLTVHQRIQ.

It belongs to the krueppel C2H2-type zinc-finger protein family.

It localises to the nucleus. Its function is as follows. May be involved in transcriptional regulation. This Homo sapiens (Human) protein is Putative zinc finger protein 876 (ZNF876P).